A 252-amino-acid chain; its full sequence is Triosephosphate isomerase (252 aa).

10 to 12 is a substrate binding site; the sequence is NWK. H96 serves as the catalytic Electrophile. The Proton acceptor role is filled by E168. Substrate-binding positions include G174, S214, and 235–236; that span reads GG.

The protein belongs to the triosephosphate isomerase family. As to quaternary structure, homodimer.

The protein localises to the cytoplasm. It carries out the reaction D-glyceraldehyde 3-phosphate = dihydroxyacetone phosphate. The protein operates within carbohydrate biosynthesis; gluconeogenesis. It functions in the pathway carbohydrate degradation; glycolysis; D-glyceraldehyde 3-phosphate from glycerone phosphate: step 1/1. In terms of biological role, involved in the gluconeogenesis. Catalyzes stereospecifically the conversion of dihydroxyacetone phosphate (DHAP) to D-glyceraldehyde-3-phosphate (G3P). This chain is Triosephosphate isomerase, found in Lactococcus lactis subsp. lactis (strain IL1403) (Streptococcus lactis).